Here is an 81-residue protein sequence, read N- to C-terminus: Photosystem I iron-sulfur center (81 aa).

2 consecutive 4Fe-4S ferredoxin-type domains span residues Ser-2–Trp-31 and Val-39–Tyr-68. [4Fe-4S] cluster-binding residues include Cys-11, Cys-14, Cys-17, Cys-21, Cys-48, Cys-51, Cys-54, and Cys-58.

In terms of assembly, the eukaryotic PSI reaction center is composed of at least 11 subunits. It depends on [4Fe-4S] cluster as a cofactor.

The protein resides in the plastid. Its subcellular location is the chloroplast thylakoid membrane. It catalyses the reaction reduced [plastocyanin] + hnu + oxidized [2Fe-2S]-[ferredoxin] = oxidized [plastocyanin] + reduced [2Fe-2S]-[ferredoxin]. In terms of biological role, apoprotein for the two 4Fe-4S centers FA and FB of photosystem I (PSI); essential for photochemical activity. FB is the terminal electron acceptor of PSI, donating electrons to ferredoxin. The C-terminus interacts with PsaA/B/D and helps assemble the protein into the PSI complex. Required for binding of PsaD and PsaE to PSI. PSI is a plastocyanin/cytochrome c6-ferredoxin oxidoreductase, converting photonic excitation into a charge separation, which transfers an electron from the donor P700 chlorophyll pair to the spectroscopically characterized acceptors A0, A1, FX, FA and FB in turn. The chain is Photosystem I iron-sulfur center from Tupiella akineta (Green alga).